The chain runs to 341 residues: Ketol-acid reductoisomerase (NADP(+)) (341 aa).

One can recognise a KARI N-terminal Rossmann domain in the interval 2 to 181 (AKVYYNGDAN…GAARAGVLET (180 aa)). Residues 25–28 (YGSQ), Arg-48, Ser-52, and 82–85 (DEKQ) each bind NADP(+). The active site involves His-107. NADP(+) is bound at residue Gly-133. The region spanning 182–327 (TFKEETETDL…RELRSMMPFV (146 aa)) is the KARI C-terminal knotted domain. Asp-190, Glu-194, Glu-226, and Glu-230 together coordinate Mg(2+). Ser-251 contributes to the substrate binding site.

It belongs to the ketol-acid reductoisomerase family. The cofactor is Mg(2+).

It carries out the reaction (2R)-2,3-dihydroxy-3-methylbutanoate + NADP(+) = (2S)-2-acetolactate + NADPH + H(+). The enzyme catalyses (2R,3R)-2,3-dihydroxy-3-methylpentanoate + NADP(+) = (S)-2-ethyl-2-hydroxy-3-oxobutanoate + NADPH + H(+). The protein operates within amino-acid biosynthesis; L-isoleucine biosynthesis; L-isoleucine from 2-oxobutanoate: step 2/4. Its pathway is amino-acid biosynthesis; L-valine biosynthesis; L-valine from pyruvate: step 2/4. Involved in the biosynthesis of branched-chain amino acids (BCAA). Catalyzes an alkyl-migration followed by a ketol-acid reduction of (S)-2-acetolactate (S2AL) to yield (R)-2,3-dihydroxy-isovalerate. In the isomerase reaction, S2AL is rearranged via a Mg-dependent methyl migration to produce 3-hydroxy-3-methyl-2-ketobutyrate (HMKB). In the reductase reaction, this 2-ketoacid undergoes a metal-dependent reduction by NADPH to yield (R)-2,3-dihydroxy-isovalerate. This chain is Ketol-acid reductoisomerase (NADP(+)), found in Geobacillus kaustophilus (strain HTA426).